Here is a 170-residue protein sequence, read N- to C-terminus: NADH-quinone oxidoreductase subunit B (170 aa).

The [4Fe-4S] cluster site is built by Cys37, Cys38, Cys102, and Cys131.

Belongs to the complex I 20 kDa subunit family. In terms of assembly, NDH-1 is composed of 14 different subunits. Subunits NuoB, C, D, E, F, and G constitute the peripheral sector of the complex. [4Fe-4S] cluster serves as cofactor.

It localises to the cell inner membrane. It catalyses the reaction a quinone + NADH + 5 H(+)(in) = a quinol + NAD(+) + 4 H(+)(out). In terms of biological role, NDH-1 shuttles electrons from NADH, via FMN and iron-sulfur (Fe-S) centers, to quinones in the respiratory chain. The immediate electron acceptor for the enzyme in this species is believed to be ubiquinone. Couples the redox reaction to proton translocation (for every two electrons transferred, four hydrogen ions are translocated across the cytoplasmic membrane), and thus conserves the redox energy in a proton gradient. The protein is NADH-quinone oxidoreductase subunit B of Geotalea daltonii (strain DSM 22248 / JCM 15807 / FRC-32) (Geobacter daltonii).